The following is a 526-amino-acid chain: Outer capsid protein VP5 (526 aa).

Residues 1-42 (MGKIIKSLSRFGKKVGNALTSNTAKKIYSTIGKAAERFAESE) form an involved in membrane permeabilization region.

This sequence belongs to the orbivirus VP5 family.

Its subcellular location is the virion. VP5 protein is one of the two proteins (with VP2) which constitute the virus particle outer capsid. Acts as a membrane permeabilization protein that mediates release of viral particles from endosomal compartments into the cytoplasm. Permeabilization activity is probably negatively regulated by VP2 and is triggered by endosomal degradation of VP2 and exposure to low pH. This is Outer capsid protein VP5 (Segment-6) from Bluetongue virus 11 (isolate USA) (BTV 11).